A 98-amino-acid polypeptide reads, in one-letter code: DNA-binding protein Fis (98 aa).

The segment at residues Gln-74–Lys-93 is a DNA-binding region (H-T-H motif).

This sequence belongs to the transcriptional regulatory Fis family. In terms of assembly, homodimer.

Its function is as follows. Activates ribosomal RNA transcription. Plays a direct role in upstream activation of rRNA promoters. In Proteus hauseri, this protein is DNA-binding protein Fis.